A 130-amino-acid polypeptide reads, in one-letter code: YopE regulator (130 aa).

Positive regulator of YopE. The sequence is that of YopE regulator (yerA) from Yersinia pestis.